Consider the following 206-residue polypeptide: Protein GET1 (206 aa).

Residues 1-4 (MPSL) are Lumenal-facing. The helical transmembrane segment at 5-24 (LITVLFLNVIIYVINTVGAA) threads the bilayer. Topologically, residues 25 to 110 (TVDGLLWLLY…TFDMTIKIAR (86 aa)) are cytoplasmic. Positions 75–100 (AKLRRRHDKAMEAYEAKNNELTQSKS) form a coiled coil. The chain crosses the membrane as a helical span at residues 111-131 (WAATSGLMLFLQFWYSKTPIF). Residues 132–155 (TLPPGWIPWQVQWVLSFPRAPMGT) are Lumenal-facing. The chain crosses the membrane as a helical span at residues 156–172 (VSIQIWGGACATVVALV). At 173–206 (GDAMRASLAYVSKPKIDRIKLGATMEGKEGKKRQ) the chain is on the cytoplasmic side.

Belongs to the WRB/GET1 family. As to quaternary structure, interacts with GET3.

The protein resides in the endoplasmic reticulum membrane. In terms of biological role, required for the post-translational delivery of tail-anchored (TA) proteins to the endoplasmic reticulum. Acts as a membrane receptor for soluble GET3, which recognizes and selectively binds the transmembrane domain of TA proteins in the cytosol. The sequence is that of Protein GET1 from Ajellomyces capsulatus (strain NAm1 / WU24) (Darling's disease fungus).